We begin with the raw amino-acid sequence, 397 residues long: Protein WRKY1 (397 aa).

Positions 326–392 form a DNA-binding region, WRKY; sequence KVADIPADEF…YEGDHNHNRV (67 aa).

Belongs to the WRKY group II-d family. Interacts with RS2. As to expression, more abundant in apices and young leaf primordia than in fully expanded leaf tissues.

It is found in the nucleus. Functionally, transcription factor. Interacts specifically with the W box (5'-(T)TGAC[CT]-3'), a frequently occurring elicitor-responsive cis-acting element. This is Protein WRKY1 from Zea mays (Maize).